Reading from the N-terminus, the 193-residue chain is uncharacterized protein (193 aa).

The segment at 1 to 144 is disordered; it reads MEKKRTLSVN…NNNNNNEGTI (144 aa). Residues 29–86 are compositionally biased toward low complexity; that stretch reads NSLNNIENNECNNNNNNNNNNNNNNSNSNNLNNSNNNNINTSSNSINSSNSINNSIDN. Positions 103-118 are enriched in polar residues; it reads KMNSSQEFQSYLTPNK. The span at 119–140 shows a compositional bias: low complexity; sequence NNNNRNNNNRNNNNNNNNNNNN. The helical transmembrane segment at 158 to 180 threads the bilayer; it reads YMIRPFLVGASASFGISIGMFYF.

The protein localises to the membrane. This is an uncharacterized protein from Dictyostelium discoideum (Social amoeba).